A 248-amino-acid chain; its full sequence is 1-(5-phosphoribosyl)-5-[(5-phosphoribosylamino)methylideneamino] imidazole-4-carboxamide isomerase (248 aa).

Asp8 functions as the Proton acceptor in the catalytic mechanism. The active-site Proton donor is the Asp129.

It belongs to the HisA/HisF family.

Its subcellular location is the cytoplasm. The enzyme catalyses 1-(5-phospho-beta-D-ribosyl)-5-[(5-phospho-beta-D-ribosylamino)methylideneamino]imidazole-4-carboxamide = 5-[(5-phospho-1-deoxy-D-ribulos-1-ylimino)methylamino]-1-(5-phospho-beta-D-ribosyl)imidazole-4-carboxamide. The protein operates within amino-acid biosynthesis; L-histidine biosynthesis; L-histidine from 5-phospho-alpha-D-ribose 1-diphosphate: step 4/9. The protein is 1-(5-phosphoribosyl)-5-[(5-phosphoribosylamino)methylideneamino] imidazole-4-carboxamide isomerase of Rhizobium johnstonii (strain DSM 114642 / LMG 32736 / 3841) (Rhizobium leguminosarum bv. viciae).